The sequence spans 513 residues: ATP synthase subunit alpha (513 aa).

169–176 lines the ATP pocket; that stretch reads GDRQTGKT.

Belongs to the ATPase alpha/beta chains family. F-type ATPases have 2 components, CF(1) - the catalytic core - and CF(0) - the membrane proton channel. CF(1) has five subunits: alpha(3), beta(3), gamma(1), delta(1), epsilon(1). CF(0) has three main subunits: a(1), b(2) and c(9-12). The alpha and beta chains form an alternating ring which encloses part of the gamma chain. CF(1) is attached to CF(0) by a central stalk formed by the gamma and epsilon chains, while a peripheral stalk is formed by the delta and b chains.

It localises to the cell inner membrane. It catalyses the reaction ATP + H2O + 4 H(+)(in) = ADP + phosphate + 5 H(+)(out). Functionally, produces ATP from ADP in the presence of a proton gradient across the membrane. The alpha chain is a regulatory subunit. The polypeptide is ATP synthase subunit alpha (Halorhodospira halophila (strain DSM 244 / SL1) (Ectothiorhodospira halophila (strain DSM 244 / SL1))).